Reading from the N-terminus, the 261-residue chain is 6-carboxyhexanoate--CoA ligase (261 aa).

This sequence belongs to the BioW family. In terms of assembly, homodimer. Mg(2+) is required as a cofactor.

The catalysed reaction is heptanedioate + ATP + CoA = 6-carboxyhexanoyl-CoA + AMP + diphosphate. It participates in metabolic intermediate metabolism; pimeloyl-CoA biosynthesis; pimeloyl-CoA from pimelate: step 1/1. In terms of biological role, catalyzes the transformation of pimelate into pimeloyl-CoA with concomitant hydrolysis of ATP to AMP. The chain is 6-carboxyhexanoate--CoA ligase from Bacillus licheniformis (strain ATCC 14580 / DSM 13 / JCM 2505 / CCUG 7422 / NBRC 12200 / NCIMB 9375 / NCTC 10341 / NRRL NRS-1264 / Gibson 46).